Consider the following 467-residue polypeptide: Venom serine carboxypeptidase (467 aa).

A signal peptide spans 1–18; that stretch reads MKKLVLLQFLFFISFARG. Asparagine 130 and asparagine 169 each carry an N-linked (GlcNAc...) asparagine glycan. The active site involves serine 202. Residues asparagine 304, asparagine 322, and asparagine 344 are each glycosylated (N-linked (GlcNAc...) asparagine). Active-site residues include aspartate 387 and histidine 444.

The protein belongs to the peptidase S10 family. In terms of tissue distribution, expressed by the venom duct.

It is found in the secreted. It carries out the reaction Release of a C-terminal amino acid with broad specificity.. In Apis mellifera (Honeybee), this protein is Venom serine carboxypeptidase.